A 307-amino-acid polypeptide reads, in one-letter code: MQAALMAFFMLLFSLLSLLGIAANGFIVLVLGREWLRYGRLLPLDMILISLGASRXCLQLVGTVHNFYYSARKVEYSGGLGRQFFHLHWHFLNSATFWFCSWLSVLFCVKIANITHPTFLWLKWRFPGWVPWLLLGSVLISFIITLLFFWVNYPVYQELLIRKFSGNMTYKWNTRIETYYFPSLKLVIWSIPFSVFLVSIMLLINSLRRHTQRMQHNGHSLQDPSTQAHTRALKSLISFLFLYALSFLSLIIDATKFISMQNDFYWPWQIAVYLCISVHPFILIFSNLKLRSMFWQVLLLARGFWVA.

At 1 to 7 (MQAALMA) the chain is on the extracellular side. A helical transmembrane segment spans residues 8–28 (FFMLLFSLLSLLGIAANGFIV). Residues 29–40 (LVLGREWLRYGR) are Cytoplasmic-facing. Residues 41–61 (LLPLDMILISLGASRXCLQLV) traverse the membrane as a helical segment. Over 62–88 (GTVHNFYYSARKVEYSGGLGRQFFHLH) the chain is Extracellular. A helical membrane pass occupies residues 89-109 (WHFLNSATFWFCSWLSVLFCV). Residues 110 to 129 (KIANITHPTFLWLKWRFPGW) are Cytoplasmic-facing. A helical transmembrane segment spans residues 130 to 150 (VPWLLLGSVLISFIITLLFFW). The Extracellular segment spans residues 151–183 (VNYPVYQELLIRKFSGNMTYKWNTRIETYYFPS). N-linked (GlcNAc...) asparagine glycosylation is present at N167. Residues 184–204 (LKLVIWSIPFSVFLVSIMLLI) form a helical membrane-spanning segment. The Cytoplasmic segment spans residues 205-234 (NSLRRHTQRMQHNGHSLQDPSTQAHTRALK). The helical transmembrane segment at 235-255 (SLISFLFLYALSFLSLIIDAT) threads the bilayer. At 256-264 (KFISMQNDF) the chain is on the extracellular side. Residues 265 to 285 (YWPWQIAVYLCISVHPFILIF) traverse the membrane as a helical segment. At 286–307 (SNLKLRSMFWQVLLLARGFWVA) the chain is on the cytoplasmic side.

It belongs to the G-protein coupled receptor T2R family.

The protein resides in the membrane. Receptor that may play a role in the perception of bitterness and is gustducin-linked. May play a role in sensing the chemical composition of the gastrointestinal content. The activity of this receptor may stimulate alpha gustducin, mediate PLC-beta-2 activation and lead to the gating of TRPM5. This chain is Taste receptor type 2 member 41 (TAS2R41), found in Gorilla gorilla gorilla (Western lowland gorilla).